The primary structure comprises 61 residues: Small ribosomal subunit protein uS14 (61 aa).

Positions 24, 27, 40, and 43 each coordinate Zn(2+).

The protein belongs to the universal ribosomal protein uS14 family. Zinc-binding uS14 subfamily. As to quaternary structure, part of the 30S ribosomal subunit. Contacts proteins S3 and S10. The cofactor is Zn(2+).

Binds 16S rRNA, required for the assembly of 30S particles and may also be responsible for determining the conformation of the 16S rRNA at the A site. This Roseiflexus sp. (strain RS-1) protein is Small ribosomal subunit protein uS14.